We begin with the raw amino-acid sequence, 381 residues long: Alkanesulfonate monooxygenase (381 aa).

This sequence belongs to the SsuD family. As to quaternary structure, homotetramer.

It carries out the reaction an alkanesulfonate + FMNH2 + O2 = an aldehyde + FMN + sulfite + H2O + 2 H(+). Functionally, catalyzes the desulfonation of aliphatic sulfonates. This chain is Alkanesulfonate monooxygenase, found in Escherichia fergusonii (strain ATCC 35469 / DSM 13698 / CCUG 18766 / IAM 14443 / JCM 21226 / LMG 7866 / NBRC 102419 / NCTC 12128 / CDC 0568-73).